The sequence spans 357 residues: Protein pelota homolog (357 aa).

Belongs to the eukaryotic release factor 1 family. Pelota subfamily. As to quaternary structure, monomer. It depends on a divalent metal cation as a cofactor.

The protein localises to the cytoplasm. Its function is as follows. May function in recognizing stalled ribosomes, interact with stem-loop structures in stalled mRNA molecules, and effect endonucleolytic cleavage of the mRNA. May play a role in the release non-functional ribosomes and degradation of damaged mRNAs. Has endoribonuclease activity. The polypeptide is Protein pelota homolog (Thermococcus gammatolerans (strain DSM 15229 / JCM 11827 / EJ3)).